A 257-amino-acid chain; its full sequence is tRNA (guanine-N(1)-)-methyltransferase (257 aa).

S-adenosyl-L-methionine contacts are provided by residues glycine 113 and 133–138; that span reads IGDYVL.

It belongs to the RNA methyltransferase TrmD family. Homodimer.

It is found in the cytoplasm. It catalyses the reaction guanosine(37) in tRNA + S-adenosyl-L-methionine = N(1)-methylguanosine(37) in tRNA + S-adenosyl-L-homocysteine + H(+). Functionally, specifically methylates guanosine-37 in various tRNAs. This is tRNA (guanine-N(1)-)-methyltransferase from Cronobacter sakazakii (strain ATCC BAA-894) (Enterobacter sakazakii).